The following is a 539-amino-acid chain: Phospho-2-dehydro-3-deoxyheptonate aldolase 2, chloroplastic (539 aa).

Disordered regions lie at residues 1–23 (MALATNSAAVSGGAAAAASSAPQ) and 41–70 (VHAADPAKSNGPVQAAAKASSPSTVAAPEK). The transit peptide at 1–54 (MALATNSAAVSGGAAAAASSAPQPRLAATFLPMRRRTVSAVHAADPAKSNGPVQ) directs the protein to the chloroplast. The span at 7-21 (SAAVSGGAAAAASSA) shows a compositional bias: low complexity.

Belongs to the class-II DAHP synthase family.

Its subcellular location is the plastid. It is found in the chloroplast. It catalyses the reaction D-erythrose 4-phosphate + phosphoenolpyruvate + H2O = 7-phospho-2-dehydro-3-deoxy-D-arabino-heptonate + phosphate. It participates in metabolic intermediate biosynthesis; chorismate biosynthesis; chorismate from D-erythrose 4-phosphate and phosphoenolpyruvate: step 1/7. This chain is Phospho-2-dehydro-3-deoxyheptonate aldolase 2, chloroplastic (DAHPS2), found in Oryza sativa subsp. japonica (Rice).